The chain runs to 354 residues: Uroporphyrinogen decarboxylase (354 aa).

Substrate-binding positions include 27–31 (RQAGR), Asp77, Tyr154, Thr209, and His327.

The protein belongs to the uroporphyrinogen decarboxylase family. Homodimer.

It is found in the cytoplasm. The enzyme catalyses uroporphyrinogen III + 4 H(+) = coproporphyrinogen III + 4 CO2. The protein operates within porphyrin-containing compound metabolism; protoporphyrin-IX biosynthesis; coproporphyrinogen-III from 5-aminolevulinate: step 4/4. Functionally, catalyzes the decarboxylation of four acetate groups of uroporphyrinogen-III to yield coproporphyrinogen-III. The protein is Uroporphyrinogen decarboxylase of Klebsiella pneumoniae (strain 342).